The sequence spans 234 residues: Meiotically up-regulated gene 35 protein (234 aa).

Basic and acidic residues predominate over residues Asp126–Leu156. The segment at Asp126–His176 is disordered. Phosphoserine is present on residues Ser127 and Ser128. Thr132 carries the phosphothreonine modification. Ser141 bears the Phosphoserine mark.

The protein resides in the cytoplasm. Its function is as follows. Has a role in meiosis. This chain is Meiotically up-regulated gene 35 protein (mug35), found in Schizosaccharomyces pombe (strain 972 / ATCC 24843) (Fission yeast).